The following is a 403-amino-acid chain: Putative queuine tRNA-ribosyltransferase (403 aa).

Asp-91 serves as the catalytic Proton acceptor. Substrate is bound by residues 91 to 95 (DSGGF), Asp-177, Gln-218, and Gly-245. The interval 275–281 (GIGAIED) is RNA binding. Asp-294 functions as the Nucleophile in the catalytic mechanism. The RNA binding; important for wobble base 34 recognition stretch occupies residues 299 to 303 (ARWAR). Cys-341, Cys-343, Cys-346, and His-372 together coordinate Zn(2+).

This sequence belongs to the queuine tRNA-ribosyltransferase family. In terms of assembly, homodimer. Within each dimer, one monomer is responsible for RNA recognition and catalysis, while the other monomer binds to the replacement base PreQ1. Zn(2+) serves as cofactor.

It catalyses the reaction 7-aminomethyl-7-carbaguanine + guanosine(34) in tRNA = 7-aminomethyl-7-carbaguanosine(34) in tRNA + guanine. In terms of biological role, catalyzes the base-exchange of a guanine (G) residue with the queuine precursor 7-aminomethyl-7-deazaguanine (PreQ1) at position 34 (anticodon wobble position) in tRNAs with GU(N) anticodons (tRNA-Asp, -Asn, -His and -Tyr). Catalysis occurs through a double-displacement mechanism. The nucleophile active site attacks the C1' of nucleotide 34 to detach the guanine base from the RNA, forming a covalent enzyme-RNA intermediate. The proton acceptor active site deprotonates the incoming PreQ1, allowing a nucleophilic attack on the C1' of the ribose to form the product. After dissociation, two additional enzymatic reactions on the tRNA convert PreQ1 to queuine (Q), resulting in the hypermodified nucleoside queuosine (7-(((4,5-cis-dihydroxy-2-cyclopenten-1-yl)amino)methyl)-7-deazaguanosine). The sequence is that of Putative queuine tRNA-ribosyltransferase from Archaeoglobus fulgidus (strain ATCC 49558 / DSM 4304 / JCM 9628 / NBRC 100126 / VC-16).